The primary structure comprises 180 residues: ATP-dependent protease subunit HslV (180 aa).

Thr-6 is a catalytic residue. Na(+) is bound by residues Ala-164, Cys-167, and Thr-170.

The protein belongs to the peptidase T1B family. HslV subfamily. As to quaternary structure, a double ring-shaped homohexamer of HslV is capped on each side by a ring-shaped HslU homohexamer. The assembly of the HslU/HslV complex is dependent on binding of ATP.

The protein localises to the cytoplasm. The enzyme catalyses ATP-dependent cleavage of peptide bonds with broad specificity.. Its activity is regulated as follows. Allosterically activated by HslU binding. Functionally, protease subunit of a proteasome-like degradation complex believed to be a general protein degrading machinery. In Borrelia duttonii (strain Ly), this protein is ATP-dependent protease subunit HslV.